Consider the following 97-residue polypeptide: Integration host factor subunit alpha (97 aa).

The protein belongs to the bacterial histone-like protein family. In terms of assembly, heterodimer of an alpha and a beta chain.

This protein is one of the two subunits of integration host factor, a specific DNA-binding protein that functions in genetic recombination as well as in transcriptional and translational control. This Histophilus somni (strain 2336) (Haemophilus somnus) protein is Integration host factor subunit alpha.